The sequence spans 640 residues: Probable threonine--tRNA ligase, cytoplasmic (640 aa).

The TGS domain occupies 1–63 (MYEVKLKVEL…LKDCKLELMT (63 aa)).

Belongs to the class-II aminoacyl-tRNA synthetase family.

It localises to the cytoplasm. The catalysed reaction is tRNA(Thr) + L-threonine + ATP = L-threonyl-tRNA(Thr) + AMP + diphosphate + H(+). This chain is Probable threonine--tRNA ligase, cytoplasmic, found in Encephalitozoon cuniculi (strain GB-M1) (Microsporidian parasite).